The chain runs to 657 residues: Conserved oligomeric Golgi complex subunit 6 (657 aa).

Residues 14 to 26 (SGAANGLSNGAGA) are compositionally biased toward low complexity. A disordered region spans residues 14–36 (SGAANGLSNGAGATPAQPNNPLS).

This sequence belongs to the COG6 family. Component of the conserved oligomeric Golgi complex which is composed of eight different subunits and is required for normal Golgi morphology and localization.

Its subcellular location is the golgi apparatus membrane. Its function is as follows. Required for normal Golgi function. The polypeptide is Conserved oligomeric Golgi complex subunit 6 (Cog6) (Rattus norvegicus (Rat)).